Here is a 37-residue protein sequence, read N- to C-terminus: Large ribosomal subunit protein bL36 (37 aa).

Belongs to the bacterial ribosomal protein bL36 family.

The chain is Large ribosomal subunit protein bL36 from Chromobacterium violaceum (strain ATCC 12472 / DSM 30191 / JCM 1249 / CCUG 213 / NBRC 12614 / NCIMB 9131 / NCTC 9757 / MK).